The following is a 443-amino-acid chain: Protoheme IX farnesyltransferase, mitochondrial (443 aa).

The segment at 68–113 (LSQRVKPKPEPPASPFLEHTSSGQARADEDELPSFPAPSRPLSRKP) is disordered. Transmembrane regions (helical) follow at residues 174 to 194 (AGFA…TSLG), 230 to 250 (ISPL…VALL), 252 to 272 (WGVN…YTCC), 286 to 306 (VGAV…TGSL), 308 to 328 (AGAL…FNAL), 363 to 383 (LIAL…FPVI), and 410 to 430 (LFFC…TCKQ).

It belongs to the UbiA prenyltransferase family.

Its subcellular location is the mitochondrion membrane. It catalyses the reaction heme b + (2E,6E)-farnesyl diphosphate + H2O = Fe(II)-heme o + diphosphate. In terms of biological role, converts protoheme IX and farnesyl diphosphate to heme O. This is Protoheme IX farnesyltransferase, mitochondrial (Cox10) from Mus musculus (Mouse).